Here is a 475-residue protein sequence, read N- to C-terminus: Coronin-2B (475 aa).

5 WD repeats span residues 80-120 (GHQG…LKRN), 130-172 (GHSR…KMID), 174-212 (HTDV…VLQE), 215-258 (CKNH…MPVT), and 260-303 (EEID…PYLT). The stretch at 431 to 470 (NELLRMFFKQQEEIRRLKEQLSQRDLLVRQLELELKNLRN) forms a coiled coil.

This sequence belongs to the WD repeat coronin family.

The protein localises to the cytoplasm. It is found in the cytoskeleton. Functionally, may play a role in the reorganization of neuronal actin structure. The chain is Coronin-2B (coro2b) from Xenopus laevis (African clawed frog).